The following is a 486-amino-acid chain: Galactose-1-phosphate uridylyltransferase (486 aa).

This sequence belongs to the galactose-1-phosphate uridylyltransferase type 2 family.

Its subcellular location is the cytoplasm. It catalyses the reaction alpha-D-galactose 1-phosphate + UDP-alpha-D-glucose = alpha-D-glucose 1-phosphate + UDP-alpha-D-galactose. The protein operates within carbohydrate metabolism; galactose metabolism. The polypeptide is Galactose-1-phosphate uridylyltransferase (Lacticaseibacillus casei (Lactobacillus casei)).